Reading from the N-terminus, the 411-residue chain is Serine hydroxymethyltransferase (411 aa).

Gly-120–Leu-122 is a binding site for (6S)-5,6,7,8-tetrahydrofolate. Lys-225 carries the N6-(pyridoxal phosphate)lysine modification. Ser-350–Phe-352 is a (6S)-5,6,7,8-tetrahydrofolate binding site.

This sequence belongs to the SHMT family. In terms of assembly, homodimer. Pyridoxal 5'-phosphate is required as a cofactor.

It localises to the cytoplasm. It catalyses the reaction (6R)-5,10-methylene-5,6,7,8-tetrahydrofolate + glycine + H2O = (6S)-5,6,7,8-tetrahydrofolate + L-serine. It participates in one-carbon metabolism; tetrahydrofolate interconversion. Its pathway is amino-acid biosynthesis; glycine biosynthesis; glycine from L-serine: step 1/1. Catalyzes the reversible interconversion of serine and glycine with tetrahydrofolate (THF) serving as the one-carbon carrier. This reaction serves as the major source of one-carbon groups required for the biosynthesis of purines, thymidylate, methionine, and other important biomolecules. Also exhibits THF-independent aldolase activity toward beta-hydroxyamino acids, producing glycine and aldehydes, via a retro-aldol mechanism. The chain is Serine hydroxymethyltransferase from Limosilactobacillus reuteri (strain DSM 20016) (Lactobacillus reuteri).